The primary structure comprises 156 residues: Maintenance of carboxysome distribution protein B (156 aa).

The tract at residues 1–55 is required for interaction with McdA:DNA complex; it reads MSNNALDRLINKQKPKVPPRNDVVSESVSNDIKTQGQQELNTSLPPSDTKATPEE. Positions 1–79 are disordered; it reads MSNNALDRLI…QKPKLSPDTF (79 aa). Polar residues predominate over residues 24 to 50; sequence VSESVSNDIKTQGQQELNTSLPPSDTK. The segment covering 51–63 has biased composition (basic and acidic residues); the sequence is ATPEEMPTSHESE. Residues 122–156 are a coiled coil; that stretch reads PEELAQVIQLAQERLSQRKAIADYKRAKTMQERFL.

Homodimerizes; may exist in higher order oligomers in solution. Forms a complex with McdA:DNA. Homohexamerizes, interacts with shell components of the carboxysome.

It localises to the carboxysome. Its function is as follows. McdA and McdB together mediate carboxysome (Cb) spacing, size, ultrastructure and probably inheritance in the cell, together they prevent Cb aggregation. McdA is an ATPase that forms dynamic gradients on the nucleoid in response to adapter protein McdB, which associates with carboxysomes. The interplay between McdA gradients on the nucleoid and McdB-bound carboxysomes result in the equal spacing of Cbs along the cell length. Stimulates the ATPase activity of McdA, causing McdA to be released from DNA. Undergoes liquid-liquid phase separation. In terms of biological role, incorrect positioning (aggregation) of carboxysomes results in reduced CO(2) fixation by encapsulated ribulose-1,5-bisphosphate carboxylase (RuBisCO, cbbL/cbbS), which leads to slower growth. The chain is Maintenance of carboxysome distribution protein B from Gloeothece citriformis (strain PCC 7424) (Cyanothece sp. (strain PCC 7424)).